Here is a 349-residue protein sequence, read N- to C-terminus: tRNA pseudouridine synthase D (349 aa).

Residue phenylalanine 26 coordinates substrate. The Nucleophile role is filled by aspartate 79. Asparagine 128 lines the substrate pocket. Residues 154–302 (GVPNYFGSQR…VEGSRRAVLL (149 aa)) enclose the TRUD domain. Position 328 (phenylalanine 328) interacts with substrate.

Belongs to the pseudouridine synthase TruD family.

It carries out the reaction uridine(13) in tRNA = pseudouridine(13) in tRNA. In terms of biological role, responsible for synthesis of pseudouridine from uracil-13 in transfer RNAs. The sequence is that of tRNA pseudouridine synthase D from Yersinia pseudotuberculosis serotype O:1b (strain IP 31758).